Consider the following 273-residue polypeptide: Phosphate import ATP-binding protein PstB (273 aa).

The disordered stretch occupies residues 1–20 (MTTVSTAAASGPAVPPPRID). Residues 27–268 (VAARNLNFYY…PSDRRTQDYI (242 aa)) form the ABC transporter domain. 59 to 66 (GPSGCGKS) contributes to the ATP binding site.

It belongs to the ABC transporter superfamily. Phosphate importer (TC 3.A.1.7) family. In terms of assembly, the complex is composed of two ATP-binding proteins (PstB), two transmembrane proteins (PstC and PstA) and a solute-binding protein (PstS).

Its subcellular location is the cell inner membrane. It carries out the reaction phosphate(out) + ATP + H2O = ADP + 2 phosphate(in) + H(+). Functionally, part of the ABC transporter complex PstSACB involved in phosphate import. Responsible for energy coupling to the transport system. This is Phosphate import ATP-binding protein PstB from Nitrobacter winogradskyi (strain ATCC 25391 / DSM 10237 / CIP 104748 / NCIMB 11846 / Nb-255).